The following is a 946-amino-acid chain: ATP-dependent 6-phosphofructokinase subunit beta (946 aa).

The segment at 1 to 559 is N-terminal catalytic PFK domain 1; that stretch reads MISIVNGTST…HLANFMAMNT (559 aa). ATP is bound by residues Gly-192, 256–257, and 286–289; these read RC and GDGS. Asp-287 lines the Mg(2+) pocket. Beta-D-fructose 6-phosphate is bound by residues 332–334, Arg-369, 376–378, Glu-433, Arg-461, and 467–470; these read SID, MGR, and HVQR. Catalysis depends on Asp-334, which acts as the Proton acceptor. Residues 560–573 form an interdomain linker region; it reads ANHEKPTLPREKRK. A C-terminal regulatory PFK domain 2 region spans residues 574–946; sequence KIAIINIGAP…LVGRTRLDKP (373 aa). Beta-D-fructose 2,6-bisphosphate-binding positions include Arg-644, 702 to 706, 747 to 749, Lys-833, 839 to 842, and Arg-920; these read TISNN, QGG, and HVQQ.

The protein belongs to the phosphofructokinase type A (PFKA) family. ATP-dependent PFK group I subfamily. Eukaryotic two domain clade 'E' sub-subfamily. As to quaternary structure, heterooctamer of 4 alpha and 4 beta chains. Mg(2+) serves as cofactor.

Its subcellular location is the cytoplasm. It carries out the reaction beta-D-fructose 6-phosphate + ATP = beta-D-fructose 1,6-bisphosphate + ADP + H(+). The protein operates within carbohydrate degradation; glycolysis; D-glyceraldehyde 3-phosphate and glycerone phosphate from D-glucose: step 3/4. Allosterically activated by ADP, AMP, or fructose 2,6-bisphosphate, and allosterically inhibited by ATP or citrate. Its function is as follows. Catalyzes the phosphorylation of D-fructose 6-phosphate to fructose 1,6-bisphosphate by ATP, the first committing step of glycolysis. The protein is ATP-dependent 6-phosphofructokinase subunit beta (PFK2) of Candida albicans (Yeast).